A 121-amino-acid chain; its full sequence is UPF0102 protein Xfasm12_1748 (121 aa).

This sequence belongs to the UPF0102 family.

This chain is UPF0102 protein Xfasm12_1748, found in Xylella fastidiosa (strain M12).